Reading from the N-terminus, the 449-residue chain is Glucose-6-phosphate isomerase (449 aa).

E291 acts as the Proton donor in catalysis. Residues H312 and K426 contribute to the active site.

The protein belongs to the GPI family.

It is found in the cytoplasm. It catalyses the reaction alpha-D-glucose 6-phosphate = beta-D-fructose 6-phosphate. It participates in carbohydrate biosynthesis; gluconeogenesis. Its pathway is carbohydrate degradation; glycolysis; D-glyceraldehyde 3-phosphate and glycerone phosphate from D-glucose: step 2/4. Catalyzes the reversible isomerization of glucose-6-phosphate to fructose-6-phosphate. The polypeptide is Glucose-6-phosphate isomerase (Streptococcus agalactiae serotype Ia (strain ATCC 27591 / A909 / CDC SS700)).